A 367-amino-acid polypeptide reads, in one-letter code: DNA replication and repair protein RecF (367 aa).

30-37 (GDNAQGKT) contacts ATP.

It belongs to the RecF family.

Its subcellular location is the cytoplasm. Its function is as follows. The RecF protein is involved in DNA metabolism; it is required for DNA replication and normal SOS inducibility. RecF binds preferentially to single-stranded, linear DNA. It also seems to bind ATP. The sequence is that of DNA replication and repair protein RecF from Clostridium beijerinckii (strain ATCC 51743 / NCIMB 8052) (Clostridium acetobutylicum).